We begin with the raw amino-acid sequence, 256 residues long: uncharacterized protein (256 aa).

The disordered stretch occupies residues 211–256 (RKLQASVTTTPPKRCKLADRPAQTTQDTPRAPQPAPVRAQRPLFTL). Over residues 246–256 (PVRAQRPLFTL) the composition is skewed to low complexity.

This is an uncharacterized protein from Orgyia pseudotsugata (Douglas-fir tussock moth).